A 214-amino-acid polypeptide reads, in one-letter code: Adenylate kinase (214 aa).

Residue 10 to 15 participates in ATP binding; the sequence is GAGKGT. The tract at residues 30–59 is NMP; the sequence is STGDMLRAAIKAGTELGLEAKRVMDEGKLV. AMP contacts are provided by residues threonine 31, arginine 36, 57-59, 85-88, and glutamine 92; these read KLV and GFPR. Positions 122–159 are LID; that stretch reads GRRVHPASGRVYHVVYNPPKVEGKDNETGDDLIVRDDD. ATP contacts are provided by residues arginine 123 and 132-133; that span reads VY. 2 residues coordinate AMP: arginine 156 and arginine 167. Residue arginine 200 participates in ATP binding.

Belongs to the adenylate kinase family. As to quaternary structure, monomer.

Its subcellular location is the cytoplasm. The enzyme catalyses AMP + ATP = 2 ADP. Its pathway is purine metabolism; AMP biosynthesis via salvage pathway; AMP from ADP: step 1/1. Its function is as follows. Catalyzes the reversible transfer of the terminal phosphate group between ATP and AMP. Plays an important role in cellular energy homeostasis and in adenine nucleotide metabolism. The chain is Adenylate kinase from Alteromonas mediterranea (strain DSM 17117 / CIP 110805 / LMG 28347 / Deep ecotype).